The following is a 123-amino-acid chain: MPTINQLIRKPRSPKPVRNKVPALKGCPQRRGVCTRVYTTTPKKPNSALRKVAKVRLTTGIEAVCYIPGEGHNLQEHSVVLIRGGRVKDLPGVRYHILRGVLDTQGVKDRKQRRSLYGAKRPK.

3-methylthioaspartic acid is present on Asp-89.

The protein belongs to the universal ribosomal protein uS12 family. In terms of assembly, part of the 30S ribosomal subunit. Contacts proteins S8 and S17. May interact with IF1 in the 30S initiation complex.

Its function is as follows. With S4 and S5 plays an important role in translational accuracy. In terms of biological role, interacts with and stabilizes bases of the 16S rRNA that are involved in tRNA selection in the A site and with the mRNA backbone. Located at the interface of the 30S and 50S subunits, it traverses the body of the 30S subunit contacting proteins on the other side and probably holding the rRNA structure together. The combined cluster of proteins S8, S12 and S17 appears to hold together the shoulder and platform of the 30S subunit. The polypeptide is Small ribosomal subunit protein uS12 (Caulobacter vibrioides (strain ATCC 19089 / CIP 103742 / CB 15) (Caulobacter crescentus)).